The chain runs to 89 residues: Small ribosomal subunit protein uS15 (89 aa).

Belongs to the universal ribosomal protein uS15 family. Part of the 30S ribosomal subunit. Forms a bridge to the 50S subunit in the 70S ribosome, contacting the 23S rRNA.

Its function is as follows. One of the primary rRNA binding proteins, it binds directly to 16S rRNA where it helps nucleate assembly of the platform of the 30S subunit by binding and bridging several RNA helices of the 16S rRNA. Forms an intersubunit bridge (bridge B4) with the 23S rRNA of the 50S subunit in the ribosome. The protein is Small ribosomal subunit protein uS15 of Leifsonia xyli subsp. xyli (strain CTCB07).